The chain runs to 283 residues: Shikimate dehydrogenase (NADP(+)) (283 aa).

Shikimate is bound by residues 19–21 (SLS) and threonine 66. The active-site Proton acceptor is the lysine 70. Positions 91 and 106 each coordinate shikimate. Residues 129–133 (GAGGA), 153–158 (NRTPEK), and leucine 224 contribute to the NADP(+) site. Position 226 (tyrosine 226) interacts with shikimate. Residue glycine 247 coordinates NADP(+).

It belongs to the shikimate dehydrogenase family. Homodimer.

The catalysed reaction is shikimate + NADP(+) = 3-dehydroshikimate + NADPH + H(+). It functions in the pathway metabolic intermediate biosynthesis; chorismate biosynthesis; chorismate from D-erythrose 4-phosphate and phosphoenolpyruvate: step 4/7. Functionally, involved in the biosynthesis of the chorismate, which leads to the biosynthesis of aromatic amino acids. Catalyzes the reversible NADPH linked reduction of 3-dehydroshikimate (DHSA) to yield shikimate (SA). The protein is Shikimate dehydrogenase (NADP(+)) of Methanothermobacter thermautotrophicus (strain ATCC 29096 / DSM 1053 / JCM 10044 / NBRC 100330 / Delta H) (Methanobacterium thermoautotrophicum).